The chain runs to 127 residues: Small ribosomal subunit protein eS8 (127 aa).

Belongs to the eukaryotic ribosomal protein eS8 family. In terms of assembly, part of the 30S ribosomal subunit.

The protein is Small ribosomal subunit protein eS8 of Nanoarchaeum equitans (strain Kin4-M).